The following is a 144-amino-acid chain: SsrA-binding protein (144 aa).

This sequence belongs to the SmpB family.

The protein localises to the cytoplasm. Functionally, required for rescue of stalled ribosomes mediated by trans-translation. Binds to transfer-messenger RNA (tmRNA), required for stable association of tmRNA with ribosomes. tmRNA and SmpB together mimic tRNA shape, replacing the anticodon stem-loop with SmpB. tmRNA is encoded by the ssrA gene; the 2 termini fold to resemble tRNA(Ala) and it encodes a 'tag peptide', a short internal open reading frame. During trans-translation Ala-aminoacylated tmRNA acts like a tRNA, entering the A-site of stalled ribosomes, displacing the stalled mRNA. The ribosome then switches to translate the ORF on the tmRNA; the nascent peptide is terminated with the 'tag peptide' encoded by the tmRNA and targeted for degradation. The ribosome is freed to recommence translation, which seems to be the essential function of trans-translation. This is SsrA-binding protein from Thermus thermophilus (strain ATCC BAA-163 / DSM 7039 / HB27).